A 72-amino-acid chain; its full sequence is UPF0270 protein ETA_31870 (72 aa).

This sequence belongs to the UPF0270 family.

The polypeptide is UPF0270 protein ETA_31870 (Erwinia tasmaniensis (strain DSM 17950 / CFBP 7177 / CIP 109463 / NCPPB 4357 / Et1/99)).